The chain runs to 341 residues: Glycerol-3-phosphate dehydrogenase [NAD(P)+] (341 aa).

S14, F15, R35, and K108 together coordinate NADPH. Sn-glycerol 3-phosphate contacts are provided by K108 and G136. A140 contacts NADPH. Residues K191, D244, S254, R255, and N256 each contribute to the sn-glycerol 3-phosphate site. The active-site Proton acceptor is K191. R255 is a binding site for NADPH. Positions 279 and 281 each coordinate NADPH.

Belongs to the NAD-dependent glycerol-3-phosphate dehydrogenase family.

It localises to the cytoplasm. It catalyses the reaction sn-glycerol 3-phosphate + NAD(+) = dihydroxyacetone phosphate + NADH + H(+). It carries out the reaction sn-glycerol 3-phosphate + NADP(+) = dihydroxyacetone phosphate + NADPH + H(+). The protein operates within membrane lipid metabolism; glycerophospholipid metabolism. Catalyzes the reduction of the glycolytic intermediate dihydroxyacetone phosphate (DHAP) to sn-glycerol 3-phosphate (G3P), the key precursor for phospholipid synthesis. This is Glycerol-3-phosphate dehydrogenase [NAD(P)+] from Pseudomonas putida (strain ATCC 700007 / DSM 6899 / JCM 31910 / BCRC 17059 / LMG 24140 / F1).